Reading from the N-terminus, the 506-residue chain is Pyruvate kinase 2 (506 aa).

S24 carries the post-translational modification Phosphoserine. Substrate is bound at residue R51. N53, S55, D86, and T87 together coordinate K(+). N53–H56 is a binding site for ATP. ATP-binding residues include R93 and K179. E244 is a Mg(2+) binding site. Positions 267, 268, and 300 each coordinate substrate. D268 is a binding site for Mg(2+).

This sequence belongs to the pyruvate kinase family. As to quaternary structure, homotetramer. The cofactor is Mg(2+). K(+) serves as cofactor.

The enzyme catalyses pyruvate + ATP = phosphoenolpyruvate + ADP + H(+). Its pathway is carbohydrate degradation; glycolysis; pyruvate from D-glyceraldehyde 3-phosphate: step 5/5. With respect to regulation, not activated by fructose-1,6-bisphosphate. Functionally, may be used by cells under conditions in which the level of glycolytic flux is very low. The polypeptide is Pyruvate kinase 2 (PYK2) (Saccharomyces cerevisiae (strain ATCC 204508 / S288c) (Baker's yeast)).